The chain runs to 124 residues: MPREQKQVRELQEGSYVMMDESPCEINSYSTAKPGKHGSAKARVEGNGVFDDRKRSLSQPVDAKVWVPIIERKQGQVVSVTGSDAQIMDLDNYQTFTMRVPEDQDMSPDDEIEYLEYEGQRKIV.

Position 36 is a hypusine (Lys36).

It belongs to the eIF-5A family.

The protein resides in the cytoplasm. Functionally, functions by promoting the formation of the first peptide bond. In Haloquadratum walsbyi (strain DSM 16790 / HBSQ001), this protein is Translation initiation factor 5A.